The primary structure comprises 448 residues: Adenylosuccinate synthetase (448 aa).

GTP contacts are provided by residues 22–28 and 50–52; these read GDEGKGK and GHT. The active-site Proton acceptor is Asp-23. Mg(2+) is bound by residues Asp-23 and Gly-50. IMP is bound by residues 23-26, 48-51, Thr-139, Arg-153, Gln-234, Thr-249, and Arg-321; these read DEGK and NAGH. His-51 functions as the Proton donor in the catalytic mechanism. 317–323 contributes to the substrate binding site; that stretch reads SVTGRPR. Residues Arg-323, 349 to 351, and 431 to 433 each bind GTP; these read KLD and STG.

The protein belongs to the adenylosuccinate synthetase family. In terms of assembly, homodimer. It depends on Mg(2+) as a cofactor.

The protein localises to the cytoplasm. The catalysed reaction is IMP + L-aspartate + GTP = N(6)-(1,2-dicarboxyethyl)-AMP + GDP + phosphate + 2 H(+). It participates in purine metabolism; AMP biosynthesis via de novo pathway; AMP from IMP: step 1/2. Plays an important role in the de novo pathway of purine nucleotide biosynthesis. Catalyzes the first committed step in the biosynthesis of AMP from IMP. The polypeptide is Adenylosuccinate synthetase (Paraburkholderia phytofirmans (strain DSM 17436 / LMG 22146 / PsJN) (Burkholderia phytofirmans)).